The following is a 537-amino-acid chain: ATP synthase subunit beta 1 (537 aa).

An ATP-binding site is contributed by 164-171; sequence GGAGVGKT. Residues 471-537 form a disordered region; it reads PKQSATEKNS…ESLEEPQNGR (67 aa). Polar residues-rich tracts occupy residues 473–498 and 507–528; these read QSAT…SPGP and IPSS…AQNE.

Belongs to the ATPase alpha/beta chains family. F-type ATPases have 2 components, CF(1) - the catalytic core - and CF(0) - the membrane proton channel. CF(1) has five subunits: alpha(3), beta(3), gamma(1), delta(1), epsilon(1). CF(0) has three main subunits: a(1), b(2) and c(9-12). The alpha and beta chains form an alternating ring which encloses part of the gamma chain. CF(1) is attached to CF(0) by a central stalk formed by the gamma and epsilon chains, while a peripheral stalk is formed by the delta and b chains.

The protein resides in the cell inner membrane. The catalysed reaction is ATP + H2O + 4 H(+)(in) = ADP + phosphate + 5 H(+)(out). Functionally, produces ATP from ADP in the presence of a proton gradient across the membrane. The catalytic sites are hosted primarily by the beta subunits. In Pseudoalteromonas atlantica (strain T6c / ATCC BAA-1087), this protein is ATP synthase subunit beta 1.